Consider the following 230-residue polypeptide: Demethylmenaquinone methyltransferase (230 aa).

S-adenosyl-L-methionine contacts are provided by residues threonine 62, aspartate 80, 100–101 (DA), and serine 117.

It belongs to the class I-like SAM-binding methyltransferase superfamily. MenG/UbiE family.

It catalyses the reaction a 2-demethylmenaquinol + S-adenosyl-L-methionine = a menaquinol + S-adenosyl-L-homocysteine + H(+). It functions in the pathway quinol/quinone metabolism; menaquinone biosynthesis; menaquinol from 1,4-dihydroxy-2-naphthoate: step 2/2. In terms of biological role, methyltransferase required for the conversion of demethylmenaquinol (DMKH2) to menaquinol (MKH2). The protein is Demethylmenaquinone methyltransferase of Mycobacterium sp. (strain KMS).